The chain runs to 304 residues: Acetyl-coenzyme A carboxylase carboxyl transferase subunit beta (304 aa).

The interval 16 to 42 is disordered; that stretch reads SSLPPKNSEGGLAYFDEPSPEQESTRK. The 257-residue stretch at 48-304 folds into the CoA carboxyltransferase N-terminal domain; sequence LWVKCPKCGE…LLRYHQEGAV (257 aa). Cys-52, Cys-55, Cys-71, and Cys-74 together coordinate Zn(2+). The C4-type zinc-finger motif lies at 52 to 74; that stretch reads CPKCGEALFNKDLVENQRVCLTC.

It belongs to the AccD/PCCB family. In terms of assembly, acetyl-CoA carboxylase is a heterohexamer composed of biotin carboxyl carrier protein (AccB), biotin carboxylase (AccC) and two subunits each of ACCase subunit alpha (AccA) and ACCase subunit beta (AccD). Zn(2+) is required as a cofactor.

The protein localises to the cytoplasm. The catalysed reaction is N(6)-carboxybiotinyl-L-lysyl-[protein] + acetyl-CoA = N(6)-biotinyl-L-lysyl-[protein] + malonyl-CoA. It functions in the pathway lipid metabolism; malonyl-CoA biosynthesis; malonyl-CoA from acetyl-CoA: step 1/1. Functionally, component of the acetyl coenzyme A carboxylase (ACC) complex. Biotin carboxylase (BC) catalyzes the carboxylation of biotin on its carrier protein (BCCP) and then the CO(2) group is transferred by the transcarboxylase to acetyl-CoA to form malonyl-CoA. This is Acetyl-coenzyme A carboxylase carboxyl transferase subunit beta from Desulfitobacterium hafniense (strain Y51).